A 231-amino-acid chain; its full sequence is MSEIKDVIVQGLWKNNSALVQLLGLCPLLAVTSTATNALGLGLATTLVLTLTNLTISTLRHWTPAEIRIPIYVMIIASVVSAVQMLINAYAFGLYQSLGIFIPLIVTNCIVVGRAEAFAAKKGPALSALDGFSIGTGATCAMFVLGSLREIIGNGTLFDGADALLGSWAKVLRVEIFHTDSPFLLAMLPPGAFIGLGLMLAGKYLIDERMKKRRAEAAAERALPNGETGNV.

6 helical membrane-spanning segments follow: residues 18–38 (ALVQ…ATNA), 39–59 (LGLG…ISTL), 63–83 (TPAE…VSAV), 86–106 (LINA…PLIV), 125–145 (ALSA…MFVL), and 182–202 (PFLL…MLAG).

This sequence belongs to the NqrDE/RnfAE family. As to quaternary structure, the complex is composed of six subunits: RsxA, RsxB, RsxC, RsxD, RsxE and RsxG.

It is found in the cell inner membrane. Part of a membrane-bound complex that couples electron transfer with translocation of ions across the membrane. Required to maintain the reduced state of SoxR. In Shigella flexneri serotype 5b (strain 8401), this protein is Ion-translocating oxidoreductase complex subunit E.